The following is a 369-amino-acid chain: Chorismate synthase (369 aa).

Positions 48 and 54 each coordinate NADP(+). FMN-binding positions include 125-127 (RSS), 238-239 (NA), G283, 298-302 (KPTSS), and R324.

The protein belongs to the chorismate synthase family. In terms of assembly, homotetramer. FMNH2 is required as a cofactor.

It catalyses the reaction 5-O-(1-carboxyvinyl)-3-phosphoshikimate = chorismate + phosphate. Its pathway is metabolic intermediate biosynthesis; chorismate biosynthesis; chorismate from D-erythrose 4-phosphate and phosphoenolpyruvate: step 7/7. Functionally, catalyzes the anti-1,4-elimination of the C-3 phosphate and the C-6 proR hydrogen from 5-enolpyruvylshikimate-3-phosphate (EPSP) to yield chorismate, which is the branch point compound that serves as the starting substrate for the three terminal pathways of aromatic amino acid biosynthesis. This reaction introduces a second double bond into the aromatic ring system. This chain is Chorismate synthase, found in Acidiphilium cryptum (strain JF-5).